A 376-amino-acid polypeptide reads, in one-letter code: MSKRDYYEVLGVGRDTSEREIKKAYKRLAMKFHPDRNPGDKEAEANFKEVKEAYEILTDSDKKAAYDQFGHAGVDPNRGGGGYGGSADFGDVFGDVFGDIFGGGRRGGQRQAARGSDLRYNLELSLEEAVRGLTKELRIPTLAACDSCDGSGAKKGSSPTTCGTCHGQGQVQMRQGFFAVQQACPTCHGRGKIIKDPCNKCHGEGRVEKSKTLSVKIPAGVDTGDRIRLSGEGEAGEYGAPPGDLYVQVSVREHAIFQRDGNNLYCEVPISFSKAALGGEIEVPTLDGKVNLKIPAETQTGRMFRMRGKGVKSVRSHAVGDLLCKVVMETPVNLNERQKELLREFEDTLTGQSKKHSPKAEGFFDGVKKFFQDLNS.

One can recognise a J domain in the interval 5–70 (DYYEVLGVGR…DKKAAYDQFG (66 aa)). The segment at 132 to 210 (GLTKELRIPT…CHGEGRVEKS (79 aa)) adopts a CR-type zinc-finger fold. Residues C145, C148, C162, C165, C184, C187, C198, and C201 each coordinate Zn(2+). 4 CXXCXGXG motif repeats span residues 145–152 (CDSCDGSG), 162–169 (CGTCHGQG), 184–191 (CPTCHGRG), and 198–205 (CNKCHGEG).

It belongs to the DnaJ family. Homodimer. Requires Zn(2+) as cofactor.

It localises to the cytoplasm. Participates actively in the response to hyperosmotic and heat shock by preventing the aggregation of stress-denatured proteins and by disaggregating proteins, also in an autonomous, DnaK-independent fashion. Unfolded proteins bind initially to DnaJ; upon interaction with the DnaJ-bound protein, DnaK hydrolyzes its bound ATP, resulting in the formation of a stable complex. GrpE releases ADP from DnaK; ATP binding to DnaK triggers the release of the substrate protein, thus completing the reaction cycle. Several rounds of ATP-dependent interactions between DnaJ, DnaK and GrpE are required for fully efficient folding. Also involved, together with DnaK and GrpE, in the DNA replication of plasmids through activation of initiation proteins. The sequence is that of Chaperone protein DnaJ from Shewanella pealeana (strain ATCC 700345 / ANG-SQ1).